The following is a 184-amino-acid chain: Ras-related protein Rap-1b-like protein (184 aa).

Residue 10–18 participates in GTP binding; it reads GSRGVGKSA. Residues 32–40 carry the Effector region motif; that stretch reads YDPTIEDSY. Residues 57–61, 116–119, and 147–149 each bind GTP; these read DTAGT, NKCD, and SAK. Cys-181 is lipidated: S-geranylgeranyl cysteine. Residues 182 to 184 constitute a propeptide, removed in mature form; that stretch reads QLL.

Belongs to the small GTPase superfamily. Ras family.

It is found in the cell membrane. The protein localises to the cytoplasm. Its subcellular location is the cytosol. It catalyses the reaction GTP + H2O = GDP + phosphate + H(+). In terms of biological role, probable GTP-binding protein with intrinsic GTPase activity. The polypeptide is Ras-related protein Rap-1b-like protein (Homo sapiens (Human)).